A 575-amino-acid chain; its full sequence is Probable cytochrome P450 514A1 (575 aa).

A helical transmembrane segment spans residues 4–24 (IFTIILTITILVLSLILKDLL). Heme is bound at residue C448.

It belongs to the cytochrome P450 family. Heme is required as a cofactor.

It localises to the membrane. The chain is Probable cytochrome P450 514A1 (cyp514A1) from Dictyostelium discoideum (Social amoeba).